The following is an 888-amino-acid chain: Alanine--tRNA ligase (888 aa).

4 residues coordinate Zn(2+): H564, H568, C676, and H680.

It belongs to the class-II aminoacyl-tRNA synthetase family. Zn(2+) serves as cofactor.

The protein localises to the cytoplasm. The catalysed reaction is tRNA(Ala) + L-alanine + ATP = L-alanyl-tRNA(Ala) + AMP + diphosphate. Its function is as follows. Catalyzes the attachment of alanine to tRNA(Ala) in a two-step reaction: alanine is first activated by ATP to form Ala-AMP and then transferred to the acceptor end of tRNA(Ala). Also edits incorrectly charged Ser-tRNA(Ala) and Gly-tRNA(Ala) via its editing domain. In Mesorhizobium japonicum (strain LMG 29417 / CECT 9101 / MAFF 303099) (Mesorhizobium loti (strain MAFF 303099)), this protein is Alanine--tRNA ligase.